A 201-amino-acid polypeptide reads, in one-letter code: Small ribosomal subunit protein uS4c (201 aa).

The 61-residue stretch at 89-149 (MRLDNILFRL…DEQKSRALIQ (61 aa)) folds into the S4 RNA-binding domain.

Belongs to the universal ribosomal protein uS4 family. As to quaternary structure, part of the 30S ribosomal subunit. Contacts protein S5. The interaction surface between S4 and S5 is involved in control of translational fidelity.

Its subcellular location is the plastid. It localises to the chloroplast. Its function is as follows. One of the primary rRNA binding proteins, it binds directly to 16S rRNA where it nucleates assembly of the body of the 30S subunit. With S5 and S12 plays an important role in translational accuracy. In Coffea arabica (Arabian coffee), this protein is Small ribosomal subunit protein uS4c (rps4).